Consider the following 295-residue polypeptide: Elongation factor Ts (295 aa).

Residues 80–83 are involved in Mg(2+) ion dislocation from EF-Tu; it reads TDFV.

This sequence belongs to the EF-Ts family.

Its subcellular location is the cytoplasm. Its function is as follows. Associates with the EF-Tu.GDP complex and induces the exchange of GDP to GTP. It remains bound to the aminoacyl-tRNA.EF-Tu.GTP complex up to the GTP hydrolysis stage on the ribosome. The polypeptide is Elongation factor Ts (Lysinibacillus sphaericus (strain C3-41)).